Consider the following 429-residue polypeptide: Serine--tRNA ligase (429 aa).

235–237 is a binding site for L-serine; sequence TAE. 266–268 contacts ATP; it reads RSE. Glutamate 289 is a binding site for L-serine. 353–356 is a binding site for ATP; that stretch reads EISS. Residue serine 389 coordinates L-serine.

This sequence belongs to the class-II aminoacyl-tRNA synthetase family. Type-1 seryl-tRNA synthetase subfamily. As to quaternary structure, homodimer. The tRNA molecule binds across the dimer.

Its subcellular location is the cytoplasm. The catalysed reaction is tRNA(Ser) + L-serine + ATP = L-seryl-tRNA(Ser) + AMP + diphosphate + H(+). It carries out the reaction tRNA(Sec) + L-serine + ATP = L-seryl-tRNA(Sec) + AMP + diphosphate + H(+). It participates in aminoacyl-tRNA biosynthesis; selenocysteinyl-tRNA(Sec) biosynthesis; L-seryl-tRNA(Sec) from L-serine and tRNA(Sec): step 1/1. Its function is as follows. Catalyzes the attachment of serine to tRNA(Ser). Is also able to aminoacylate tRNA(Sec) with serine, to form the misacylated tRNA L-seryl-tRNA(Sec), which will be further converted into selenocysteinyl-tRNA(Sec). This chain is Serine--tRNA ligase, found in Histophilus somni (strain 129Pt) (Haemophilus somnus).